A 1444-amino-acid polypeptide reads, in one-letter code: Probable serine/threonine-protein kinase irlC (1444 aa).

Positions 335–370 are disordered; the sequence is TLINNNNNNNNNNNNNNNNNNNNNNNNNNNNNNNSK. Positions 338-368 are enriched in low complexity; it reads NNNNNNNNNNNNNNNNNNNNNNNNNNNNNNN. Residues 495–529 form an SWIM-type zinc finger; it reads FTFYLSFGEIFTCSCEDYKREFSCKHMFFILLNYY. Positions 584–613 are enriched in low complexity; the sequence is TSPFQSINNNNNNNLNNNNNNNLNNNNNNE. 2 disordered regions span residues 584-619 and 864-938; these read TSPF…NKFK and QKEK…ITPI. 2 coiled-coil regions span residues 593 to 620 and 847 to 879; these read NNNN…KFKE and IKAE…KSKI. Residues 864 to 876 show a composition bias toward basic residues; the sequence is QKEKKKQKQKQSK. Over residues 885–937 the composition is skewed to low complexity; it reads SSSSSSSSSPSTSNTTITSTTPTTTTTTTTTTTPTTTTTTTTTSSPKQKPITP. Residues 981 to 1246 form the Protein kinase domain; it reads RKEENVLGRG…IEKILLHPFF (266 aa). ATP-binding positions include 987–995 and Lys1010; that span reads LGRGSNGTL. Asp1116 serves as the catalytic Proton acceptor. The region spanning 1279 to 1444 is the KEN domain; it reads NYQEINLKNN…LIYFNDLIIK (166 aa).

The protein belongs to the protein kinase superfamily. Ser/Thr protein kinase family.

It carries out the reaction L-seryl-[protein] + ATP = O-phospho-L-seryl-[protein] + ADP + H(+). The enzyme catalyses L-threonyl-[protein] + ATP = O-phospho-L-threonyl-[protein] + ADP + H(+). This is Probable serine/threonine-protein kinase irlC (irlC) from Dictyostelium discoideum (Social amoeba).